We begin with the raw amino-acid sequence, 102 residues long: Large ribosomal subunit protein bL21 (102 aa).

It belongs to the bacterial ribosomal protein bL21 family. Part of the 50S ribosomal subunit. Contacts protein L20.

Functionally, this protein binds to 23S rRNA in the presence of protein L20. In Staphylococcus haemolyticus (strain JCSC1435), this protein is Large ribosomal subunit protein bL21.